The following is a 257-amino-acid chain: Ribosomal RNA small subunit methyltransferase A (257 aa).

S-adenosyl-L-methionine-binding residues include H12, L14, G39, E60, D83, and N101.

It belongs to the class I-like SAM-binding methyltransferase superfamily. rRNA adenine N(6)-methyltransferase family. RsmA subfamily.

The protein localises to the cytoplasm. The enzyme catalyses adenosine(1518)/adenosine(1519) in 16S rRNA + 4 S-adenosyl-L-methionine = N(6)-dimethyladenosine(1518)/N(6)-dimethyladenosine(1519) in 16S rRNA + 4 S-adenosyl-L-homocysteine + 4 H(+). In terms of biological role, specifically dimethylates two adjacent adenosines (A1518 and A1519) in the loop of a conserved hairpin near the 3'-end of 16S rRNA in the 30S particle. May play a critical role in biogenesis of 30S subunits. This Nitrosomonas europaea (strain ATCC 19718 / CIP 103999 / KCTC 2705 / NBRC 14298) protein is Ribosomal RNA small subunit methyltransferase A.